Reading from the N-terminus, the 280-residue chain is Urease accessory protein UreD (280 aa).

This sequence belongs to the UreD family. As to quaternary structure, ureD, UreF and UreG form a complex that acts as a GTP-hydrolysis-dependent molecular chaperone, activating the urease apoprotein by helping to assemble the nickel containing metallocenter of UreC. The UreE protein probably delivers the nickel.

It localises to the cytoplasm. In terms of biological role, required for maturation of urease via the functional incorporation of the urease nickel metallocenter. This Staphylococcus saprophyticus subsp. saprophyticus (strain ATCC 15305 / DSM 20229 / NCIMB 8711 / NCTC 7292 / S-41) protein is Urease accessory protein UreD.